The primary structure comprises 65 residues: MERYGHLAGVIPVDEIDDMFESNVIGGTSSIDCVRLASNTPEGTVNLTVRIEFCPSAACTYSCRL.

A propeptide spans 1–27 (MERYGHLAGVIPVDEIDDMFESNVIGG) (cleaved by FlvT). Position 28 is a 2,3-didehydrobutyrine; by FlvM2 (Thr-28). The lanthionine (Ser-Cys); by FlvM2 cross-link spans 29-33 (SSIDC). 2,3-didehydroalanine (Ser); by FlvM2 is present on Ser-30. The residue at position 44 (Thr-44) is a 2,3-didehydrobutyrine; by FlvM2. A cross-link (beta-methyllanthionine (Thr-Cys); by FlvM2) is located at residues 48 to 54 (TVRIEFC). The segment at residues 56 to 59 (SAAC) is a cross-link (lanthionine (Ser-Cys); by FlvM2). Positions 60 to 63 (TYSC) form a cross-link, beta-methyllanthionine (Thr-Cys); by FlvM2.

In terms of processing, contains LL-lanthionine, DL-lanthionine, and DL-beta-methyllanthionine, when coepressed in E.coli with the flavecin synthetase FlvM2.

Its subcellular location is the secreted. Its function is as follows. Lanthionine-containing peptide that does probably not show antibacterial activity, since its analog [+2]Flvbeta.h does not show antibacterial activity against M.luteus. Also does not show antibiotic activity when tested with [Del2]Flvalpha.a, an analog of Flvalpha.a, which is encoded by the same operon than Flvbeta.h. The bactericidal activity of lantibiotics is based on depolarization of energized bacterial cytoplasmic membranes, initiated by the formation of aqueous transmembrane pores. The chain is Lantipeptide Flvbeta.h from Ruminococcus flavefaciens.